The primary structure comprises 168 residues: G/U mismatch-specific DNA glycosylase (168 aa).

It belongs to the uracil-DNA glycosylase (UDG) superfamily. TDG/mug family. As to quaternary structure, binds DNA as a monomer.

It localises to the cytoplasm. It carries out the reaction Specifically hydrolyzes mismatched double-stranded DNA and polynucleotides, releasing free uracil.. Excises ethenocytosine and uracil, which can arise by alkylation or deamination of cytosine, respectively, from the corresponding mispairs with guanine in ds-DNA. It is capable of hydrolyzing the carbon-nitrogen bond between the sugar-phosphate backbone of the DNA and the mispaired base. The complementary strand guanine functions in substrate recognition. Required for DNA damage lesion repair in stationary-phase cells. This Salmonella dublin (strain CT_02021853) protein is G/U mismatch-specific DNA glycosylase.